The following is a 589-amino-acid chain: Protein kinase G11A (589 aa).

Residues 1-167 (MASKAMPRAP…SACSSISSVT (167 aa)) form a disordered region. Polar residues-rich tracts occupy residues 15–36 (NLQS…SPSK), 46–55 (AESSKPNSEV), and 63–76 (TQHQ…TGSN). Residues 91–100 (RLADEEKGVV) show a composition bias toward basic and acidic residues. A compositionally biased stretch (low complexity) spans 142–165 (SSSRCRPSTSSDVSDESACSSISS). Positions 195 to 533 (FKLLKKLGCG…ATEIKQHPFF (339 aa)) constitute a Protein kinase domain. Residues 201-209 (LGCGDIGSV) and Lys224 each bind ATP. Asp320 (proton acceptor) is an active-site residue. The disordered stretch occupies residues 551–589 (RPVEIERPPKQPVSTSEPAAAPSDAAQKSSDSYLEFDFF).

The protein belongs to the protein kinase superfamily. Ser/Thr protein kinase family.

The catalysed reaction is L-seryl-[protein] + ATP = O-phospho-L-seryl-[protein] + ADP + H(+). It catalyses the reaction L-threonyl-[protein] + ATP = O-phospho-L-threonyl-[protein] + ADP + H(+). May play a role in the regulation of metabolism and signal transduction processes. The sequence is that of Protein kinase G11A from Oryza sativa subsp. indica (Rice).